The chain runs to 188 residues: Ribosome-recycling factor (188 aa).

It belongs to the RRF family.

It is found in the cytoplasm. Responsible for the release of ribosomes from messenger RNA at the termination of protein biosynthesis. May increase the efficiency of translation by recycling ribosomes from one round of translation to another. This Blochmanniella pennsylvanica (strain BPEN) protein is Ribosome-recycling factor.